A 213-amino-acid chain; its full sequence is Succinate dehydrogenase subunit 3-1, mitochondrial (213 aa).

A mitochondrion-targeting transit peptide spans 1 to 105 (MAATALFRSI…LDVGTSKRLF (105 aa)). A heme-binding site is contributed by H130. A helical transmembrane segment spans residues 148 to 165 (ISGVYLTGVTFAGYLLYL).

Component of complex II composed of eight subunits in plants: four classical SDH subunits SDH1, SDH2, SDH3 and SDH4 (a flavoprotein (FP), an iron-sulfur protein (IP), and a cytochrome b composed of a large and a small subunit.), as well as four subunits unknown in mitochondria from bacteria and heterotrophic eukaryotes. It depends on heme as a cofactor. In terms of tissue distribution, expressed in flowers, inflorescences and stems.

The protein localises to the mitochondrion inner membrane. It functions in the pathway carbohydrate metabolism; tricarboxylic acid cycle. Its function is as follows. Membrane-anchoring subunit of succinate dehydrogenase (SDH). In Arabidopsis thaliana (Mouse-ear cress), this protein is Succinate dehydrogenase subunit 3-1, mitochondrial.